A 160-amino-acid polypeptide reads, in one-letter code: Lipoprotein signal peptidase (160 aa).

2 consecutive transmembrane segments (helical) span residues 60 to 80 (TEWLIAASCLGVILALTAFFL) and 84 to 104 (LPFLDTRPGVAALGIILAGTI). Residues Asp-118 and Asp-132 contribute to the active site. Residues 127–147 (TFNMADSCLTLGIIWLVLLYL) traverse the membrane as a helical segment.

The protein belongs to the peptidase A8 family.

The protein resides in the cell membrane. The catalysed reaction is Release of signal peptides from bacterial membrane prolipoproteins. Hydrolyzes -Xaa-Yaa-Zaa-|-(S,diacylglyceryl)Cys-, in which Xaa is hydrophobic (preferably Leu), and Yaa (Ala or Ser) and Zaa (Gly or Ala) have small, neutral side chains.. The protein operates within protein modification; lipoprotein biosynthesis (signal peptide cleavage). This protein specifically catalyzes the removal of signal peptides from prolipoproteins. This chain is Lipoprotein signal peptidase, found in Dehalococcoides mccartyi (strain ATCC BAA-2266 / KCTC 15142 / 195) (Dehalococcoides ethenogenes (strain 195)).